A 482-amino-acid chain; its full sequence is CBL-interacting serine/threonine-protein kinase 23 (482 aa).

Positions 1–25 (MASRTTPSRSTPSRSTPSGSSSGGR) are enriched in low complexity. Residues 1–29 (MASRTTPSRSTPSRSTPSGSSSGGRTRVG) form a disordered region. Residues 31-286 (YELGRTLGEG…FAEVIENEWF (256 aa)) enclose the Protein kinase domain. ATP-binding positions include 37 to 45 (LGEGTFAKV) and Lys-60. Asp-154 functions as the Proton acceptor in the catalytic mechanism. An activation loop region spans residues 172 to 201 (DFGLSALPQQVREDGLLHTTCGTPNYVAPE). Position 176 is a phosphoserine (Ser-176). A Phosphothreonine modification is found at Thr-190. Positions 328-352 (KTPVTMNAFELISTSQGLNLGSLFE) constitute an NAF domain. The tract at residues 359 to 388 (KRKTRFTSKSSANEIVTKIEAAAAPMGFDV) is PPI. A disordered region spans residues 459–482 (KEEGTDGGGTNGAMANRTIAKQST).

This sequence belongs to the protein kinase superfamily. CAMK Ser/Thr protein kinase family. SNF1 subfamily. As to quaternary structure, part of a K(+)-channel calcium-sensing kinase/phosphatase complex composed by a calcium sensor CBL (CBL1, CBL2, CBL3 or CBL9), a kinase CIPK (CIPK6, CIPK16 or CIPK23), a phosphatase PP2C (AIP1) and a K(+)-channel (AKT1). Interacts with AKT1, CBL1, CBL2, CBL3, CBL5, CBL8, CBL9 and NRT1.1. Requires Mn(2+) as cofactor. Post-translationally, autophosphorylated. As to expression, in seedlings, mostly in vascular bundles, and in roots, especially in cortex and endodermis cells. In adult plants, mostly expressed in flowers, and, to a lower extent, in roots, leaves, stems and siliques, particularly in vascular tissues. Also detected in guard cells and root hairs.

The protein resides in the cell membrane. It carries out the reaction L-seryl-[protein] + ATP = O-phospho-L-seryl-[protein] + ADP + H(+). The enzyme catalyses L-threonyl-[protein] + ATP = O-phospho-L-threonyl-[protein] + ADP + H(+). Functionally, CIPK serine-threonine protein kinases interact with CBL proteins. Binding of a CBL protein to the regulatory NAF domain of CIPK protein leads to activation of the kinase in a calcium-dependent manner. Downstream of CBL1, CBL2, CBL3 and CBL9, regulates by phosphorylation the K(+) conductance and uptake of AKT1 in low K(+) condition, in response to calcium signaling and during the stomatal opening regulation by monitoring the turgor pressure in guard cells. In response to low nitrate concentration, phosphorylates NRT1.1, switching it from a low-affinity nitrate transporter to a high-affinity transporter. Confers tolerance to low potassium conditions. Involved in drought sensitivity and leaf transpiration. The protein is CBL-interacting serine/threonine-protein kinase 23 (CIPK23) of Arabidopsis thaliana (Mouse-ear cress).